Reading from the N-terminus, the 314-residue chain is Protein YIF1B (314 aa).

The residue at position 1 (Met-1) is an N-acetylmethionine. Over residues 1–12 (MHPAGLAAAAAG) the composition is skewed to low complexity. The interval 1–55 (MHPAGLAAAAAGTPRLRKWPSKRRIPVSQPGMADPHQLFDDTSSAQSRGYGAQRA) is disordered. At 1–156 (MHPAGLAAAA…APRFDVNAPD (156 aa)) the chain is on the cytoplasmic side. The residue at position 13 (Thr-13) is a Phosphothreonine. Over residues 15 to 25 (RLRKWPSKRRI) the composition is skewed to basic residues. A Phosphoserine modification is found at Ser-65. A helical transmembrane segment spans residues 157 to 177 (LYIPAMAFITYVLVAGLALGT). Residues 178-192 (QDRFSPDLLGLQASS) are Extracellular-facing. A helical membrane pass occupies residues 193 to 213 (ALAWLTLEVLAILLSLYLVTV). The Cytoplasmic portion of the chain corresponds to 214–219 (NTDLTT). The chain crosses the membrane as a helical span at residues 220 to 240 (IDLVAFLGYKYVGMIGGVLMG). Residue Leu-241 is a topological domain, extracellular. The helical transmembrane segment at 242-262 (LFGKIGYYLVLGWCCVAIFVF) threads the bilayer. At 263-292 (MIRTLRLKILADAAAEGVPVRGARNQLRMY) the chain is on the cytoplasmic side. The chain crosses the membrane as a helical span at residues 293 to 313 (LTMAVAAAQPMLMYWLTFHLV). Position 314 (Arg-314) is a topological domain, extracellular.

This sequence belongs to the YIF1 family. Interacts with HTR1A (via C-terminus). Interacts with ABCB9 (via TMD0); this interaction allows (but is not essential) the ER-to-Golgi trafficking and strongly depends on a salt bridge within TMD0.

It localises to the endoplasmic reticulum membrane. It is found in the golgi apparatus membrane. Its subcellular location is the endoplasmic reticulum-Golgi intermediate compartment membrane. Its function is as follows. Functions in endoplasmic reticulum to Golgi vesicle-mediated transport and regulates the proper organization of the endoplasmic reticulum and the Golgi. Plays a key role in targeting to neuronal dendrites receptors such as HTR1A. Plays also a role in primary cilium and sperm flagellum assembly probably through protein transport to these compartments. The protein is Protein YIF1B of Homo sapiens (Human).